We begin with the raw amino-acid sequence, 110 residues long: Endoribonuclease SymE (110 aa).

Residues 29–74 (SRYPDYTRIPALTMKGQWLEAAGFATGTEVDVRVMNGCIVLTAQQP) form the SpoVT-AbrB domain.

It belongs to the SymE family.

It localises to the cytoplasm. Its function is as follows. Involved in the degradation and recycling of damaged RNA. It is itself a target for degradation by the ATP-dependent protease Lon. The protein is Endoribonuclease SymE of Salmonella typhi.